A 387-amino-acid polypeptide reads, in one-letter code: MPTNWLLPESIADVLPSEARKIEELRRRMLDLFRTYGYELVMPPMLEYIESLLSGTGHDLDLKTFKLVDQLSGRTIGLRADITPQVARIDAHLLNRAGVTRLCYAGSVLHTRPSGFHVTREPLQIGAEIYGHAGLEADLEIQELMLAALSAAGLADVRLDLCHVGVVAALLEQSPIAARIQDDLFTALAAKDVPALRAITVDLPPAQRDAINLLPALYGGVDVLARARKQLPALPAIGRALDDLATLAERAGGATVNIDLADLRGYHYHSGVMFTAYVAGVPNAVARGGRYDKVGEAFGRARPATGFSLDLREVAGISPVEARAAAIHAPWSGDAKLREAIAALRAAGEIVIQSLPGHPEDLEEFAYDRQLVEESGRWIVKPRNASI.

The protein belongs to the class-II aminoacyl-tRNA synthetase family. HisZ subfamily. As to quaternary structure, heteromultimer composed of HisG and HisZ subunits.

The protein localises to the cytoplasm. It functions in the pathway amino-acid biosynthesis; L-histidine biosynthesis; L-histidine from 5-phospho-alpha-D-ribose 1-diphosphate: step 1/9. Its function is as follows. Required for the first step of histidine biosynthesis. May allow the feedback regulation of ATP phosphoribosyltransferase activity by histidine. The polypeptide is ATP phosphoribosyltransferase regulatory subunit (Ralstonia pickettii (strain 12J)).